We begin with the raw amino-acid sequence, 189 residues long: Glycerol-3-phosphate acyltransferase (189 aa).

A run of 5 helical transmembrane segments spans residues 1 to 21 (MFWLLALLAYLLGSLSFAIVL), 50 to 70 (KLAILTLLGDLCKGLLPVLLA), 77 to 97 (LHAQAWVGICAVLGHLFPLYF), 111 to 131 (MLMALYFPAALLAIGAWLLTF), and 151 to 171 (LLAWREPEALLPISVLTVMIV).

The protein belongs to the PlsY family. As to quaternary structure, probably interacts with PlsX.

Its subcellular location is the cell inner membrane. The catalysed reaction is an acyl phosphate + sn-glycerol 3-phosphate = a 1-acyl-sn-glycero-3-phosphate + phosphate. It functions in the pathway lipid metabolism; phospholipid metabolism. Catalyzes the transfer of an acyl group from acyl-phosphate (acyl-PO(4)) to glycerol-3-phosphate (G3P) to form lysophosphatidic acid (LPA). This enzyme utilizes acyl-phosphate as fatty acyl donor, but not acyl-CoA or acyl-ACP. The protein is Glycerol-3-phosphate acyltransferase of Pseudomonas putida (strain ATCC 47054 / DSM 6125 / CFBP 8728 / NCIMB 11950 / KT2440).